The sequence spans 190 residues: Protein LZIC (190 aa).

Residues 2-63 (ASRGKTETSK…SEFNDSLKKI (62 aa)) adopt a coiled-coil conformation.

Belongs to the CTNNBIP1 family. In terms of assembly, does not interact with CTNNB1.

The chain is Protein LZIC (Lzic) from Mus musculus (Mouse).